A 796-amino-acid chain; its full sequence is Putative aconitate hydratase, mitochondrial (796 aa).

A mitochondrion-targeting transit peptide spans 1-28; the sequence is MLRQIVSQRSAARRQLIDQLAPCLRRGL. Substrate is bound by residues Gln108 and 201 to 203; that span reads DSH. [4Fe-4S] cluster is bound by residues Cys399, Cys462, and Cys465. 2 residues coordinate substrate: Arg489 and Arg494. The interval 540–569 is disordered; that stretch reads EPPTGQDLPSKGFEAGNPAFQPSAPVPDSS. Residue 685-686 coordinates substrate; sequence AR.

The protein belongs to the aconitase/IPM isomerase family.

The protein localises to the mitochondrion. In terms of biological role, has no detectable activity towards cis-acontiate or cis-homoaconitate. The chain is Putative aconitate hydratase, mitochondrial (acoB) from Emericella nidulans (strain FGSC A4 / ATCC 38163 / CBS 112.46 / NRRL 194 / M139) (Aspergillus nidulans).